We begin with the raw amino-acid sequence, 219 residues long: Probable GTP-binding protein EngB (219 aa).

One can recognise an EngB-type G domain in the interval 24 to 207 (VQPEIAFAGR…HALIESWLRP (184 aa)). GTP-binding positions include 32-39 (GRSNAGKS), 59-63 (GRTQH), 81-84 (DLPG), 148-151 (TKCD), and 185-188 (LFSA). Mg(2+)-binding residues include Ser-39 and Thr-61.

Belongs to the TRAFAC class TrmE-Era-EngA-EngB-Septin-like GTPase superfamily. EngB GTPase family. It depends on Mg(2+) as a cofactor.

Its function is as follows. Necessary for normal cell division and for the maintenance of normal septation. The sequence is that of Probable GTP-binding protein EngB from Burkholderia thailandensis (strain ATCC 700388 / DSM 13276 / CCUG 48851 / CIP 106301 / E264).